Reading from the N-terminus, the 456-residue chain is Acid sphingomyelinase-like phosphodiesterase 3b (456 aa).

Positions 1-18 (MTLLGWLIFLAPWGVAGA) are cleaved as a signal peptide. Zn(2+) is bound by residues D28 and H30. Residue N34 is glycosylated (N-linked (GlcNAc...) asparagine). A disulfide bond links C45 and C64. N-linked (GlcNAc...) asparagine glycosylation occurs at N72. D93 contributes to the Zn(2+) binding site. N-linked (GlcNAc...) asparagine glycosylation occurs at N100. N134 is a binding site for Zn(2+). 2 N-linked (GlcNAc...) asparagine glycosylation sites follow: N164 and N223. Zn(2+) is bound by residues H236, H277, and H279. Cystine bridges form between C405-C409 and C415-C428.

Belongs to the acid sphingomyelinase family. As to quaternary structure, interacts with TLR4, TLR7, TLR8 and TLR9. The cofactor is Zn(2+). Post-translationally, N-glycosylated. Macrophages and dendritic cells.

The protein localises to the secreted. The protein resides in the cell membrane. Lipid-modulating phosphodiesterase. Active on the surface of macrophages and dendritic cells and strongly influences macrophage lipid composition and membrane fluidity. Acts as a negative regulator of Toll-like receptor signaling. Has in vitro phosphodiesterase activity, but the physiological substrate is unknown. Lacks activity with phosphocholine-containing lipids, but can cleave CDP-choline, and can release phosphate from ATP and ADP (in vitro). In Mus musculus (Mouse), this protein is Acid sphingomyelinase-like phosphodiesterase 3b (Smpdl3b).